A 339-amino-acid chain; its full sequence is DNA-directed RNA polymerase subunit alpha (339 aa).

The tract at residues 1 to 233 (MVREEVAGST…DLFLPFLHAE (233 aa)) is alpha N-terminal domain (alpha-NTD). Residues 266-339 (GIPLNCIFID…IDLLKNKLSF (74 aa)) form an alpha C-terminal domain (alpha-CTD) region.

This sequence belongs to the RNA polymerase alpha chain family. In plastids the minimal PEP RNA polymerase catalytic core is composed of four subunits: alpha, beta, beta', and beta''. When a (nuclear-encoded) sigma factor is associated with the core the holoenzyme is formed, which can initiate transcription.

The protein resides in the plastid. Its subcellular location is the chloroplast. It carries out the reaction RNA(n) + a ribonucleoside 5'-triphosphate = RNA(n+1) + diphosphate. Functionally, DNA-dependent RNA polymerase catalyzes the transcription of DNA into RNA using the four ribonucleoside triphosphates as substrates. This Elymus canadensis (Canada wild rye) protein is DNA-directed RNA polymerase subunit alpha.